We begin with the raw amino-acid sequence, 557 residues long: Potassium-transporting ATPase potassium-binding subunit (557 aa).

12 helical membrane passes run 5–25, 63–83, 132–152, 170–190, 253–273, 283–303, 329–349, 356–376, 379–399, 416–436, 484–504, and 526–546; these read GFLL…PLGS, LSAI…MLLG, GLTV…FALI, LLRI…LFFI, FVQM…FGEV, LLWA…WAEV, VLVS…AVIA, ALGG…FGGV, GLYG…LMIG, LTAL…ALAM, LLAL…MAIA, and LFVG…FIPA.

Belongs to the KdpA family. As to quaternary structure, the system is composed of three essential subunits: KdpA, KdpB and KdpC.

The protein localises to the cell inner membrane. Its function is as follows. Part of the high-affinity ATP-driven potassium transport (or Kdp) system, which catalyzes the hydrolysis of ATP coupled with the electrogenic transport of potassium into the cytoplasm. This subunit binds the periplasmic potassium ions and delivers the ions to the membrane domain of KdpB through an intramembrane tunnel. This is Potassium-transporting ATPase potassium-binding subunit from Escherichia coli O6:H1 (strain CFT073 / ATCC 700928 / UPEC).